Reading from the N-terminus, the 95-residue chain is Small ribosomal subunit protein bS6 (95 aa).

Belongs to the bacterial ribosomal protein bS6 family.

Binds together with bS18 to 16S ribosomal RNA. This is Small ribosomal subunit protein bS6 from Clostridium perfringens (strain ATCC 13124 / DSM 756 / JCM 1290 / NCIMB 6125 / NCTC 8237 / Type A).